The sequence spans 192 residues: Erythropoietin (192 aa).

A signal peptide spans 1-26 (MGVPDCLALPLLVTFLLLSLGLPVLG). The cysteines at positions 33 and 187 are disulfide-linked. Residues Asn-50, Asn-64, and Asn-109 are each glycosylated (N-linked (GlcNAc...) asparagine).

Belongs to the EPO/TPO family.

It localises to the secreted. Hormone involved in the regulation of erythrocyte proliferation and differentiation and the maintenance of a physiological level of circulating erythrocyte mass. Binds to EPOR leading to EPOR dimerization and JAK2 activation thereby activating specific downstream effectors, including STAT1 and STAT3. The sequence is that of Erythropoietin (EPO) from Spalax golani (Golan Heights blind mole rat).